Consider the following 378-residue polypeptide: MGIKGLNSIIQQQVPSAIRPREMKQFFGRRVAIDASMSLYQFLIAVRQADGVQLASADGETTSHLMGMFYRTLRMVDHGLKPCYVFDGKPPVLKAHELDKRTERRKETEQKLAELTEQAEIMKHERRLVKVEQWHVAEAKKLLGLMGIPYVDAPGEAEAQCAELAKKGKVFAAASEDMDTLCYRTPYLLRHLTFSEARKEPIHEIDTELVLQGLGLSQEQLVDLGIMLGCDYCESIKGVGPVTALKLIKEHGSLENIVEFISSGGNAKWKVPENWPYKEARALFLQPDVLDAEGVSLKWEEPKEEELIAFMCKEKGFNEDRIKSGIQKLRKGLKGGVQGRLDSFFKVKPKTTEQLAASARKAQAAKKTNQKGKVLKRR.

An N-domain region spans residues 1 to 105 (MGIKGLNSII…HELDKRTERR (105 aa)). Aspartate 34 is a Mg(2+) binding site. DNA contacts are provided by arginine 47 and arginine 71. Mg(2+)-binding residues include aspartate 87, glutamate 156, glutamate 158, aspartate 177, and aspartate 179. Residues 120–251 (EIMKHERRLV…VTALKLIKEH (132 aa)) form an I-domain region. Glutamate 156 contacts DNA. DNA contacts are provided by glycine 229 and aspartate 231. Aspartate 231 contributes to the Mg(2+) binding site. The interaction with PCNA stretch occupies residues 337 to 345 (VQGRLDSFF). The segment covering 356 to 367 (AASARKAQAAKK) has biased composition (low complexity). Residues 356-378 (AASARKAQAAKKTNQKGKVLKRR) are disordered. Residues 368–378 (TNQKGKVLKRR) show a composition bias toward basic residues.

Belongs to the XPG/RAD2 endonuclease family. FEN1 subfamily. Interacts with PCNA. Three molecules of FEN1 bind to one PCNA trimer with each molecule binding to one PCNA monomer. PCNA stimulates the nuclease activity without altering cleavage specificity. It depends on Mg(2+) as a cofactor. Post-translationally, phosphorylated. Phosphorylation upon DNA damage induces relocalization to the nuclear plasma.

It is found in the nucleus. Its subcellular location is the nucleolus. The protein resides in the nucleoplasm. The protein localises to the mitochondrion. Its function is as follows. Structure-specific nuclease with 5'-flap endonuclease and 5'-3' exonuclease activities involved in DNA replication and repair. During DNA replication, cleaves the 5'-overhanging flap structure that is generated by displacement synthesis when DNA polymerase encounters the 5'-end of a downstream Okazaki fragment. It enters the flap from the 5'-end and then tracks to cleave the flap base, leaving a nick for ligation. Also involved in the long patch base excision repair (LP-BER) pathway, by cleaving within the apurinic/apyrimidinic (AP) site-terminated flap. Acts as a genome stabilization factor that prevents flaps from equilibrating into structures that lead to duplications and deletions. Also possesses 5'-3' exonuclease activity on nicked or gapped double-stranded DNA, and exhibits RNase H activity. Also involved in replication and repair of rDNA and in repairing mitochondrial DNA. This is Flap endonuclease 1 from Eremothecium gossypii (strain ATCC 10895 / CBS 109.51 / FGSC 9923 / NRRL Y-1056) (Yeast).